Consider the following 1446-residue polypeptide: ABC-type transporter oblD (1446 aa).

Asparagine 9, asparagine 28, asparagine 222, asparagine 281, and asparagine 305 each carry an N-linked (GlcNAc...) asparagine glycan. One can recognise an ABC transporter 1 domain in the interval 104–357 (LEVLSLVSKA…FLDMGFVCPD (254 aa)). 6 helical membrane passes run 468 to 488 (VTIS…SIFY), 502 to 522 (ALLF…MLTL), 548 to 568 (MIMD…VLYF), 577 to 597 (GAFF…SMFF), 610 to 630 (ALPF…FTIP), and 719 to 739 (IGVI…ATDF). The 243-residue stretch at 796 to 1038 (FQWKDVCFDI…ILIDYFVRNG (243 aa)) folds into the ABC transporter 2 domain. 832-839 (GVSGAGKT) provides a ligand contact to ATP. 5 helical membrane-spanning segments follow: residues 1147 to 1167 (ALCV…PNTI), 1177 to 1197 (IFML…HFVA), 1217 to 1237 (FIIS…VLMF), 1265 to 1285 (LMVW…IAAF), and 1301 to 1321 (LCLI…FWIF). Asparagine 1344 and asparagine 1359 each carry an N-linked (GlcNAc...) asparagine glycan. A helical membrane pass occupies residues 1412 to 1432 (FGLMWVFIVFNIFAACLLYWW).

It belongs to the ABC transporter superfamily. ABCG family. PDR (TC 3.A.1.205) subfamily.

It is found in the cell membrane. ABC-type transporter; part of the gene cluster that mediates the biosynthesis of the sesterterpenes ophiobolins, fungal phytotoxins with potential anti-cancer activities. Acts as a specific transporter involved in ophiobolins secretion. The sequence is that of ABC-type transporter oblD from Aspergillus clavatus (strain ATCC 1007 / CBS 513.65 / DSM 816 / NCTC 3887 / NRRL 1 / QM 1276 / 107).